Consider the following 261-residue polypeptide: tRNA pseudouridine synthase A (261 aa).

Asp51 (nucleophile) is an active-site residue. Residue Tyr109 coordinates substrate.

Belongs to the tRNA pseudouridine synthase TruA family. In terms of assembly, homodimer.

The enzyme catalyses uridine(38/39/40) in tRNA = pseudouridine(38/39/40) in tRNA. In terms of biological role, formation of pseudouridine at positions 38, 39 and 40 in the anticodon stem and loop of transfer RNAs. This is tRNA pseudouridine synthase A from Shewanella baltica (strain OS223).